The chain runs to 324 residues: Acetaldehyde dehydrogenase 1 (324 aa).

Residue S18–I21 coordinates NAD(+). C136 functions as the Acyl-thioester intermediate in the catalytic mechanism. Residues S167–N175 and N297 each bind NAD(+).

The protein belongs to the acetaldehyde dehydrogenase family.

The enzyme catalyses acetaldehyde + NAD(+) + CoA = acetyl-CoA + NADH + H(+). The polypeptide is Acetaldehyde dehydrogenase 1 (Parafrankia sp. (strain EAN1pec)).